The primary structure comprises 152 residues: Phosphoribosyl-AMP cyclohydrolase (152 aa).

Asp92 contacts Mg(2+). Cys93 lines the Zn(2+) pocket. 2 residues coordinate Mg(2+): Asp94 and Asp96. Residues Cys111 and Cys118 each contribute to the Zn(2+) site.

Belongs to the PRA-CH family. In terms of assembly, homodimer. It depends on Mg(2+) as a cofactor. Zn(2+) is required as a cofactor.

It localises to the cytoplasm. It carries out the reaction 1-(5-phospho-beta-D-ribosyl)-5'-AMP + H2O = 1-(5-phospho-beta-D-ribosyl)-5-[(5-phospho-beta-D-ribosylamino)methylideneamino]imidazole-4-carboxamide. Its pathway is amino-acid biosynthesis; L-histidine biosynthesis; L-histidine from 5-phospho-alpha-D-ribose 1-diphosphate: step 3/9. Its function is as follows. Catalyzes the hydrolysis of the adenine ring of phosphoribosyl-AMP. The sequence is that of Phosphoribosyl-AMP cyclohydrolase from Sinorhizobium fredii (strain NBRC 101917 / NGR234).